The primary structure comprises 306 residues: Ribonuclease Z (306 aa).

The Zn(2+) site is built by H63, H65, D67, H68, H140, D211, and H269. D67 functions as the Proton acceptor in the catalytic mechanism.

The protein belongs to the RNase Z family. Homodimer. The cofactor is Zn(2+).

The enzyme catalyses Endonucleolytic cleavage of RNA, removing extra 3' nucleotides from tRNA precursor, generating 3' termini of tRNAs. A 3'-hydroxy group is left at the tRNA terminus and a 5'-phosphoryl group is left at the trailer molecule.. Functionally, zinc phosphodiesterase, which displays some tRNA 3'-processing endonuclease activity. Probably involved in tRNA maturation, by removing a 3'-trailer from precursor tRNA. In Listeria welshimeri serovar 6b (strain ATCC 35897 / DSM 20650 / CCUG 15529 / CIP 8149 / NCTC 11857 / SLCC 5334 / V8), this protein is Ribonuclease Z.